A 137-amino-acid chain; its full sequence is 15 kDa protein A (137 aa).

The N-terminal stretch at M1–A20 is a signal peptide. Cystine bridges form between C77-C88 and C99-C116.

The protein belongs to the cathelicidin family. As to expression, large granules of neutrophils.

The protein localises to the secreted. Functionally, binds to bacterial lipopolysaccharides (LPS), potentiates strongly the early antibacterial effects of BPI. Inhibits the late lethal action of BPI. The chain is 15 kDa protein A from Oryctolagus cuniculus (Rabbit).